A 588-amino-acid chain; its full sequence is Aspartate--tRNA(Asp/Asn) ligase (588 aa).

E172 is an L-aspartate binding site. The tract at residues Q196 to K199 is aspartate. Residue R218 participates in L-aspartate binding. ATP contacts are provided by residues R218–E220 and Q227. An L-aspartate-binding site is contributed by H450. E484 contacts ATP. L-aspartate is bound at residue R491. G536–R539 contacts ATP.

Belongs to the class-II aminoacyl-tRNA synthetase family. Type 1 subfamily. Homodimer.

Its subcellular location is the cytoplasm. It catalyses the reaction tRNA(Asx) + L-aspartate + ATP = L-aspartyl-tRNA(Asx) + AMP + diphosphate. In terms of biological role, aspartyl-tRNA synthetase with relaxed tRNA specificity since it is able to aspartylate not only its cognate tRNA(Asp) but also tRNA(Asn). Reaction proceeds in two steps: L-aspartate is first activated by ATP to form Asp-AMP and then transferred to the acceptor end of tRNA(Asp/Asn). The chain is Aspartate--tRNA(Asp/Asn) ligase from Nitrosospira multiformis (strain ATCC 25196 / NCIMB 11849 / C 71).